The primary structure comprises 97 residues: Secreted RxLR effector protein BLR05 (97 aa).

An N-terminal signal peptide occupies residues 1–21; sequence MGPQHLLALVVVSILVAAGNA. Residues 32–60 carry the RxLR-dEER motif; sequence RALRPSVIADQEHAVHAIPATNFISKDED. Residues 69-89 form a helical membrane-spanning segment; the sequence is IEIIRIAIFSLLVVGVFAIMA.

The protein belongs to the RxLR effector family. Interacts with host transcription factor NAC069.

Its subcellular location is the secreted. The protein localises to the host endoplasmic reticulum membrane. Functionally, secreted effector that inhibits stress-induced relocalization of the transcription factor NAC069 to the nucleus, thus affecting its broad role in abiotic and biotic stress responses. This Bremia lactucae (Lettuce downy mildew) protein is Secreted RxLR effector protein BLR05.